A 400-amino-acid chain; its full sequence is MRIVQPVIEQLKAQSHPVCHYIYDLVGLEHHLQHITSSLPSNCQMYYAMKANSERKILDTISQYVEGFEVASQGEIAKGLAFKPANHIIFGGPGKTDEELRYAVSEGVQRIHVESMHELQRLNAILEDEDKTQHILLRVNLAGPFPNATLHMAGRPTQFGISEDEVDDVIEAALAMPKIHLDGFHFHSISNNLDSNLHVDVVKLYFKKAKAWSEKHRFPLKHINLGGGIGVNYADLTNQFEWDNFVERFKTLIVEQEMEDVTLNFECGRFIVAHIGYYVTEVLDIKKVHGAWYAILRGGTQQFRLPVSWQHNHPFDIYRYKDNPYSFEKVSISRQDTTLVGQLCTPKDVFAREVQIDAISTGDVIVFKYAGAYGWSISHHDFLSHPHPEFIYLTQTKEDE.

An N6-(pyridoxal phosphate)lysine modification is found at Lys-50. Pyridoxal 5'-phosphate contacts are provided by residues Gly-228 and 266–269 (ECGR). Cys-344 acts as the Proton donor in catalysis. Tyr-373 contacts pyridoxal 5'-phosphate.

The protein belongs to the Orn/Lys/Arg decarboxylase class-II family. As to quaternary structure, homodimer. Pyridoxal 5'-phosphate serves as cofactor.

It catalyses the reaction 2-[(L-alanin-3-ylcarbamoyl)methyl]-2-hydroxybutanedioate + H(+) = 2-[(2-aminoethylcarbamoyl)methyl]-2-hydroxybutanedioate + CO2. The protein operates within siderophore biosynthesis. Functionally, catalyzes the decarboxylation of citryl-L-2,3-diaminopropionic acid to citryl-diaminoethane, the second step in staphyloferrin B biosynthesis. The polypeptide is 2-[(L-alanin-3-ylcarbamoyl)methyl]-2-hydroxybutanedioate decarboxylase (Staphylococcus aureus (strain NCTC 8325 / PS 47)).